The primary structure comprises 295 residues: Phosphatidylserine decarboxylase proenzyme (295 aa).

Active-site charge relay system; for autoendoproteolytic cleavage activity residues include D90, H147, and S254. The active-site Schiff-base intermediate with substrate; via pyruvic acid; for decarboxylase activity is the S254. S254 is modified (pyruvic acid (Ser); by autocatalysis).

The protein belongs to the phosphatidylserine decarboxylase family. PSD-B subfamily. Prokaryotic type I sub-subfamily. Heterodimer of a large membrane-associated beta subunit and a small pyruvoyl-containing alpha subunit. It depends on pyruvate as a cofactor. Is synthesized initially as an inactive proenzyme. Formation of the active enzyme involves a self-maturation process in which the active site pyruvoyl group is generated from an internal serine residue via an autocatalytic post-translational modification. Two non-identical subunits are generated from the proenzyme in this reaction, and the pyruvate is formed at the N-terminus of the alpha chain, which is derived from the carboxyl end of the proenzyme. The autoendoproteolytic cleavage occurs by a canonical serine protease mechanism, in which the side chain hydroxyl group of the serine supplies its oxygen atom to form the C-terminus of the beta chain, while the remainder of the serine residue undergoes an oxidative deamination to produce ammonia and the pyruvoyl prosthetic group on the alpha chain. During this reaction, the Ser that is part of the protease active site of the proenzyme becomes the pyruvoyl prosthetic group, which constitutes an essential element of the active site of the mature decarboxylase.

It localises to the cell membrane. The catalysed reaction is a 1,2-diacyl-sn-glycero-3-phospho-L-serine + H(+) = a 1,2-diacyl-sn-glycero-3-phosphoethanolamine + CO2. The protein operates within phospholipid metabolism; phosphatidylethanolamine biosynthesis; phosphatidylethanolamine from CDP-diacylglycerol: step 2/2. Its function is as follows. Catalyzes the formation of phosphatidylethanolamine (PtdEtn) from phosphatidylserine (PtdSer). In Sodalis glossinidius (strain morsitans), this protein is Phosphatidylserine decarboxylase proenzyme.